Consider the following 264-residue polypeptide: Thymidylate synthase (264 aa).

Position 21 (R21) interacts with dUMP. Residue H51 participates in (6R)-5,10-methylene-5,6,7,8-tetrahydrofolate binding. DUMP is bound at residue 126–127 (RR). C146 functions as the Nucleophile in the catalytic mechanism. Residues 166–169 (RSGD), N177, and 207–209 (HLY) contribute to the dUMP site. D169 serves as a coordination point for (6R)-5,10-methylene-5,6,7,8-tetrahydrofolate. A263 contacts (6R)-5,10-methylene-5,6,7,8-tetrahydrofolate.

It belongs to the thymidylate synthase family. Bacterial-type ThyA subfamily. As to quaternary structure, homodimer.

It is found in the cytoplasm. It catalyses the reaction dUMP + (6R)-5,10-methylene-5,6,7,8-tetrahydrofolate = 7,8-dihydrofolate + dTMP. The protein operates within pyrimidine metabolism; dTTP biosynthesis. In terms of biological role, catalyzes the reductive methylation of 2'-deoxyuridine-5'-monophosphate (dUMP) to 2'-deoxythymidine-5'-monophosphate (dTMP) while utilizing 5,10-methylenetetrahydrofolate (mTHF) as the methyl donor and reductant in the reaction, yielding dihydrofolate (DHF) as a by-product. This enzymatic reaction provides an intracellular de novo source of dTMP, an essential precursor for DNA biosynthesis. The polypeptide is Thymidylate synthase (Brevibacillus brevis (strain 47 / JCM 6285 / NBRC 100599)).